The sequence spans 78 residues: Large ribosomal subunit protein eL20 (78 aa).

It belongs to the eukaryotic ribosomal protein eL20 family. As to quaternary structure, part of the 50S ribosomal subunit. Binds 23S rRNA.

This Pyrobaculum neutrophilum (strain DSM 2338 / JCM 9278 / NBRC 100436 / V24Sta) (Thermoproteus neutrophilus) protein is Large ribosomal subunit protein eL20.